Reading from the N-terminus, the 374-residue chain is Pectate lyase 1 (374 aa).

The first 22 residues, 1–22 (MKYLLPSAAAGLLLLAAQPTMA), serve as a signal peptide directing secretion. An intrachain disulfide couples Cys93 to Cys176. Positions 150, 152, 187, and 191 each coordinate Ca(2+). Arg239 is an active-site residue. A disulfide bridge links Cys350 with Cys373.

Belongs to the polysaccharide lyase 1 family. PLADES subfamily. Ca(2+) is required as a cofactor.

The protein resides in the secreted. It carries out the reaction Eliminative cleavage of (1-&gt;4)-alpha-D-galacturonan to give oligosaccharides with 4-deoxy-alpha-D-galact-4-enuronosyl groups at their non-reducing ends.. It participates in glycan metabolism; pectin degradation; 2-dehydro-3-deoxy-D-gluconate from pectin: step 2/5. Functionally, involved in maceration and soft-rotting of plant tissue. The polypeptide is Pectate lyase 1 (pel1) (Pectobacterium atrosepticum (strain SCRI 1043 / ATCC BAA-672) (Erwinia carotovora subsp. atroseptica)).